Here is a 405-residue protein sequence, read N- to C-terminus: Dihydrolipoyllysine-residue succinyltransferase component of 2-oxoglutarate dehydrogenase complex (405 aa).

The region spanning 3–78 is the Lipoyl-binding domain; it reads SVDILVPDLP…TSRQILGRLR (76 aa). At lysine 44 the chain carries N6-lipoyllysine. The segment at 75–111 is disordered; the sequence is GRLREGNSAGKETSAKSEEKASTPAQRQQASLEEQNN. The segment covering 97–111 has biased composition (polar residues); it reads TPAQRQQASLEEQNN. The region spanning 113–150 is the Peripheral subunit-binding (PSBD) domain; that stretch reads ALSPAIRRLLAEHNLDASAIKGTGVGGRLTREDVEKHL. Residue lysine 148 is modified to N6-acetyllysine. Over residues 153–173 the composition is skewed to low complexity; the sequence is APAKESAPAAAAPAAQPALAA. A disordered region spans residues 153-178; the sequence is APAKESAPAAAAPAAQPALAARSEKR. Catalysis depends on residues histidine 376 and aspartate 380.

The protein belongs to the 2-oxoacid dehydrogenase family. Forms a 24-polypeptide structural core with octahedral symmetry. Part of the 2-oxoglutarate dehydrogenase (OGDH) complex composed of E1 (2-oxoglutarate dehydrogenase), E2 (dihydrolipoamide succinyltransferase) and E3 (dihydrolipoamide dehydrogenase); the complex contains multiple copies of the three enzymatic components (E1, E2 and E3). Interacts with SucA (via N-terminus), the E1 component of OGDH complex. (R)-lipoate serves as cofactor.

The enzyme catalyses N(6)-[(R)-dihydrolipoyl]-L-lysyl-[protein] + succinyl-CoA = N(6)-[(R)-S(8)-succinyldihydrolipoyl]-L-lysyl-[protein] + CoA. The protein operates within amino-acid degradation; L-lysine degradation via saccharopine pathway; glutaryl-CoA from L-lysine: step 6/6. Its function is as follows. E2 component of the 2-oxoglutarate dehydrogenase (OGDH) complex which catalyzes the second step in the conversion of 2-oxoglutarate to succinyl-CoA and CO(2). The chain is Dihydrolipoyllysine-residue succinyltransferase component of 2-oxoglutarate dehydrogenase complex (sucB) from Escherichia coli O157:H7.